Reading from the N-terminus, the 459-residue chain is Cysteine desulfurase (459 aa).

The transit peptide at 1–17 directs the protein to the mitochondrion; sequence MVGSVAGNMLLRAAWRR. Pyridoxal 5'-phosphate-binding residues include Ala-129, Thr-130, Gln-237, Ser-257, and His-259. The residue at position 260 (Lys-260) is an N6-(pyridoxal phosphate)lysine. Thr-297 is a binding site for pyridoxal 5'-phosphate. The Cysteine persulfide intermediate role is filled by Cys-383. Residue Cys-383 participates in [2Fe-2S] cluster binding. Zn(2+) is bound at residue Cys-383. Cys-383 carries the post-translational modification Cysteine persulfide.

The protein belongs to the class-V pyridoxal-phosphate-dependent aminotransferase family. NifS/IscS subfamily. As to quaternary structure, homodimer. Component of the mitochondrial core iron-sulfur cluster (ISC) complex composed of NFS1, LYRM4, NDUFAB1, ISCU, FXN, and FDX2; this complex is a heterohexamer containing two copies of each monomer. Component of cyteine desulfurase complex composed of NFS1, LYRM4 and NDUFAB1; this complex contributes to the activation of cysteine desulfurase activity and NFS1 stabilization. Interacts (homodimer form) with ISCU (D-state); each monomer interacts with the C-terminal regions of each NFS1 monomer. Interacts with HSPA9. Interacts (via homodimer form) with FDX2. Interacts (via homodimer form) with FXN. Interacts with LYRM4. Component of a complex composed of FXN, NFS1, LYRM4 and ISCU. The cofactor is pyridoxal 5'-phosphate. N-gluconoylated. In terms of processing, cysteine persulfide intermediate is reduced by thiol-containing molecules like glutathione and L-cysteine. Persulfide reduction is a rate-limiting step of cysteine desulfurase catalytic cycle. In terms of tissue distribution, ubiquitous.

It localises to the mitochondrion. It carries out the reaction (sulfur carrier)-H + L-cysteine = (sulfur carrier)-SH + L-alanine. The enzyme catalyses L-cysteinyl-[cysteine desulfurase] + L-cysteine = S-sulfanyl-L-cysteinyl-[cysteine desulfurase] + L-alanine. Active only in complex with LYRM4. Mitochondrial cysteine desulfurase, of the core iron-sulfur cluster (ISC) assembly complex, that catalyzes the desulfuration of L-cysteine to L-alanine, as component of the cysteine desulfurase complex, leading to the formation of a cysteine persulfide intermediate at the active site cysteine residue and participates in the [2Fe-2S] clusters assembly on the scaffolding protein ISCU. The persulfide is then transferred on the flexible Cys loop from the catalytic site of NFS1 to the surface of NFS1. After the NFS1-linked persulfide sulfur is transferred to one of the conserved Cys residues of the scaffold, a reaction assisted by FXN. The core iron-sulfur cluster (ISC) assembly complex is involved in the de novo synthesis of a [2Fe-2S] cluster, the first step of the mitochondrial iron-sulfur protein biogenesis. This process is initiated by the cysteine desulfurase complex (NFS1:LYRM4:NDUFAB1) that produces persulfide which is delivered on the scaffold protein ISCU in a FXN-dependent manner. Then this complex is stabilized by FDX2 which provides reducing equivalents to accomplish the [2Fe-2S] cluster assembly. Finally, the [2Fe-2S] cluster is transferred from ISCU to chaperone proteins, including HSCB, HSPA9 and GLRX5. This is Cysteine desulfurase from Mus musculus (Mouse).